A 177-amino-acid polypeptide reads, in one-letter code: Transcription termination/antitermination protein NusG (177 aa).

A KOW domain is found at 125–150; that stretch reads EGENVRITEGPFANFTAIVEEYDMVR.

This sequence belongs to the NusG family.

Its function is as follows. Participates in transcription elongation, termination and antitermination. This chain is Transcription termination/antitermination protein NusG, found in Campylobacter jejuni subsp. jejuni serotype O:2 (strain ATCC 700819 / NCTC 11168).